The chain runs to 225 residues: NAD(P)H-quinone oxidoreductase subunit K, chloroplastic (225 aa).

[4Fe-4S] cluster-binding residues include Cys-43, Cys-44, Cys-108, and Cys-139.

This sequence belongs to the complex I 20 kDa subunit family. In terms of assembly, NDH is composed of at least 16 different subunits, 5 of which are encoded in the nucleus. [4Fe-4S] cluster serves as cofactor.

The protein resides in the plastid. It is found in the chloroplast thylakoid membrane. The enzyme catalyses a plastoquinone + NADH + (n+1) H(+)(in) = a plastoquinol + NAD(+) + n H(+)(out). The catalysed reaction is a plastoquinone + NADPH + (n+1) H(+)(in) = a plastoquinol + NADP(+) + n H(+)(out). NDH shuttles electrons from NAD(P)H:plastoquinone, via FMN and iron-sulfur (Fe-S) centers, to quinones in the photosynthetic chain and possibly in a chloroplast respiratory chain. The immediate electron acceptor for the enzyme in this species is believed to be plastoquinone. Couples the redox reaction to proton translocation, and thus conserves the redox energy in a proton gradient. This Populus alba (White poplar) protein is NAD(P)H-quinone oxidoreductase subunit K, chloroplastic.